An 877-amino-acid polypeptide reads, in one-letter code: Oligopeptide transporter 2 (877 aa).

Over 1–167 the chain is Cytoplasmic; it reads MSETVKDKVI…DPTIPVETFR (167 aa). A helical transmembrane segment spans residues 168–188; it reads AYFLAIIWSVIGSGFNEFFSH. Arginine 189 is a topological domain (extracellular). The helical transmembrane segment at 190–210 threads the bilayer; it reads VVSISLNTPIIQMFLYICGKA. The Cytoplasmic portion of the chain corresponds to 211 to 240; it reads WAKTIPCWTITIRGRKYGINIDKPWTQKEQ. A helical transmembrane segment spans residues 241–261; that stretch reads MFSTLLYAICQGAFYTHYNIL. The Extracellular portion of the chain corresponds to 262 to 272; the sequence is TQKLFYHSAFS. Residues 273–293 traverse the membrane as a helical segment; the sequence is FGYQFLLSLSVQFIGFGFAGI. Topologically, residues 294–334 are cytoplasmic; sequence LRKFVVYPARALWPTVMPTIAINKALLGKEKHESGMSRYKF. The chain crosses the membrane as a helical span at residues 335-355; that stretch reads FFLTFFIMFIYNWFPTYIINI. Residues 356 to 374 lie on the Extracellular side of the membrane; sequence LNTFNWMTWIKPSNINLAN. N-linked (GlcNAc...) asparagine glycosylation occurs at asparagine 374. Residues 375–395 traverse the membrane as a helical segment; that stretch reads ITGGVTGLGINPISSFDWNVI. The Cytoplasmic portion of the chain corresponds to 396–404; that stretch reads SFNSPLVYP. A helical transmembrane segment spans residues 405–425; it reads FWSYLTQYLGCILAALIVIAV. Residues 426–480 lie on the Extracellular side of the membrane; that stretch reads YYSNYMSCQYLPIFTNSLYTNTGHSFKVTEVLDSDNKLDVKKYQSYSPPYYSAGN. The helical transmembrane segment at 481–501 threads the bilayer; it reads LVSYGAFICAYPLMITWSFIV. The Cytoplasmic portion of the chain corresponds to 502 to 553; it reads HSKLLFNAFKDWALNLWAMRKLKSWVTMFKSDYRALDDYDDPHSNAMKNYKE. A helical membrane pass occupies residues 554 to 574; the sequence is VPDWWYFAILIGSLVVGIAVV. Residues 575–582 are Extracellular-facing; the sequence is EHYPTNTP. Residues 583-603 traverse the membrane as a helical segment; sequence VWGLFVCLGFNFVFLIPTTIL. At 604-614 the chain is on the cytoplasmic side; the sequence is QATTGYSFGLN. A helical membrane pass occupies residues 615 to 635; sequence LLIEMVMGYALPGNPIAIMIL. Residues 636 to 671 lie on the Extracellular side of the membrane; sequence KAFGYNIDGQADNYVSNLKIAHYCKIPPMALFRGQC. A helical membrane pass occupies residues 672–692; it reads VIVFIQIFVNLGVLNWQISNI. Residues 693 to 730 are Cytoplasmic-facing; the sequence is KDFCTPHQNAKFTCPDAVTYYNASVVWGAIGPKRIFNY. A helical membrane pass occupies residues 731 to 751; sequence IYPIFKWCWLIGACIGIFFGV. The Extracellular segment spans residues 752–766; the sequence is WKRWGKFYPRYFDPM. Residues 767 to 789 form a helical membrane-spanning segment; it reads LFVGGMLNMSPPYNLMYYTSGMI. At 790-811 the chain is on the cytoplasmic side; that stretch reads VSYISQYYMKRHHLNLWEKYNY. The helical transmembrane segment at 812–832 threads the bilayer; it reads VLSAGFSTGLVLSAIIIFFAV. Residues 833-877 are Extracellular-facing; the sequence is QYKDTAFNWWGNTVPYAGADGVGYPLKNITDTANGYFGYAPGHYP. Asparagine 860 carries an N-linked (GlcNAc...) asparagine glycan.

It belongs to the oligopeptide OPT transporter family.

Its subcellular location is the membrane. Transports tetra- and pentapeptides. Does not transport glutathione. In Saccharomyces cerevisiae (strain ATCC 204508 / S288c) (Baker's yeast), this protein is Oligopeptide transporter 2 (OPT2).